Here is a 346-residue protein sequence, read N- to C-terminus: Thiamine-phosphate synthase (346 aa).

The interval 1-125 is unknown; that stretch reads MSVTPNPDQH…SKISAQIRYE (125 aa). A thiamine-phosphate synthase region spans residues 126-346; sequence IYDLEVIILK…SKELLGKLKK (221 aa). 4-amino-2-methyl-5-(diphosphooxymethyl)pyrimidine is bound by residues 177-181 and asparagine 209; that span reads QYRCK. Mg(2+)-binding residues include aspartate 210 and aspartate 229. 4-amino-2-methyl-5-(diphosphooxymethyl)pyrimidine is bound at residue serine 248. 274 to 276 serves as a coordination point for 2-[(2R,5Z)-2-carboxy-4-methylthiazol-5(2H)-ylidene]ethyl phosphate; the sequence is TKS. A 4-amino-2-methyl-5-(diphosphooxymethyl)pyrimidine-binding site is contributed by lysine 277. Glycine 304 contacts 2-[(2R,5Z)-2-carboxy-4-methylthiazol-5(2H)-ylidene]ethyl phosphate.

The protein belongs to the thiamine-phosphate synthase family. Requires Mg(2+) as cofactor.

It catalyses the reaction 2-[(2R,5Z)-2-carboxy-4-methylthiazol-5(2H)-ylidene]ethyl phosphate + 4-amino-2-methyl-5-(diphosphooxymethyl)pyrimidine + 2 H(+) = thiamine phosphate + CO2 + diphosphate. The enzyme catalyses 2-(2-carboxy-4-methylthiazol-5-yl)ethyl phosphate + 4-amino-2-methyl-5-(diphosphooxymethyl)pyrimidine + 2 H(+) = thiamine phosphate + CO2 + diphosphate. It carries out the reaction 4-methyl-5-(2-phosphooxyethyl)-thiazole + 4-amino-2-methyl-5-(diphosphooxymethyl)pyrimidine + H(+) = thiamine phosphate + diphosphate. It functions in the pathway cofactor biosynthesis; thiamine diphosphate biosynthesis; thiamine phosphate from 4-amino-2-methyl-5-diphosphomethylpyrimidine and 4-methyl-5-(2-phosphoethyl)-thiazole: step 1/1. In terms of biological role, condenses 4-methyl-5-(beta-hydroxyethyl)thiazole monophosphate (THZ-P) and 2-methyl-4-amino-5-hydroxymethyl pyrimidine pyrophosphate (HMP-PP) to form thiamine monophosphate (TMP). The polypeptide is Thiamine-phosphate synthase (Prochlorococcus marinus (strain SARG / CCMP1375 / SS120)).